We begin with the raw amino-acid sequence, 239 residues long: Ribosomal RNA small subunit methyltransferase G (239 aa).

Residues Gly-78, Phe-83, 129–130 (AE), and Arg-148 each bind S-adenosyl-L-methionine.

Belongs to the methyltransferase superfamily. RNA methyltransferase RsmG family.

It is found in the cytoplasm. In terms of biological role, specifically methylates the N7 position of a guanine in 16S rRNA. In Clostridium botulinum (strain ATCC 19397 / Type A), this protein is Ribosomal RNA small subunit methyltransferase G.